The primary structure comprises 447 residues: Trigger factor (447 aa).

Positions 164-249 (GNQVTFDFEG…VKLVEKSKLP (86 aa)) constitute a PPIase FKBP-type domain.

Belongs to the FKBP-type PPIase family. Tig subfamily.

The protein resides in the cytoplasm. The enzyme catalyses [protein]-peptidylproline (omega=180) = [protein]-peptidylproline (omega=0). Functionally, involved in protein export. Acts as a chaperone by maintaining the newly synthesized protein in an open conformation. Functions as a peptidyl-prolyl cis-trans isomerase. The protein is Trigger factor of Psychrobacter arcticus (strain DSM 17307 / VKM B-2377 / 273-4).